The primary structure comprises 185 residues: Orotate phosphoribosyltransferase (185 aa).

Residues Arg-98, Lys-99, Lys-102, His-104, and 128 to 136 contribute to the 5-phospho-alpha-D-ribose 1-diphosphate site; that span reads EDVTTTGGS. Orotate is bound by residues Thr-132 and Arg-160.

This sequence belongs to the purine/pyrimidine phosphoribosyltransferase family. PyrE subfamily. As to quaternary structure, homodimer. The cofactor is Mg(2+).

It catalyses the reaction orotidine 5'-phosphate + diphosphate = orotate + 5-phospho-alpha-D-ribose 1-diphosphate. It functions in the pathway pyrimidine metabolism; UMP biosynthesis via de novo pathway; UMP from orotate: step 1/2. In terms of biological role, catalyzes the transfer of a ribosyl phosphate group from 5-phosphoribose 1-diphosphate to orotate, leading to the formation of orotidine monophosphate (OMP). The protein is Orotate phosphoribosyltransferase of Bradyrhizobium sp. (strain BTAi1 / ATCC BAA-1182).